A 389-amino-acid chain; its full sequence is S-adenosylmethionine synthase (389 aa).

Histidine 15 contacts ATP. Aspartate 17 is a Mg(2+) binding site. Glutamate 43 is a binding site for K(+). L-methionine is bound by residues glutamate 56 and glutamine 99. The tract at residues 99 to 109 is flexible loop; it reads QSPDIAQGVNE. Residues 166-168, 234-235, aspartate 243, 249-250, alanine 266, and lysine 270 contribute to the ATP site; these read DAK, RF, and RK. Aspartate 243 lines the L-methionine pocket. Lysine 274 is a binding site for L-methionine.

Belongs to the AdoMet synthase family. Homotetramer; dimer of dimers. It depends on Mg(2+) as a cofactor. The cofactor is K(+).

The protein localises to the cytoplasm. The catalysed reaction is L-methionine + ATP + H2O = S-adenosyl-L-methionine + phosphate + diphosphate. It participates in amino-acid biosynthesis; S-adenosyl-L-methionine biosynthesis; S-adenosyl-L-methionine from L-methionine: step 1/1. Functionally, catalyzes the formation of S-adenosylmethionine (AdoMet) from methionine and ATP. The overall synthetic reaction is composed of two sequential steps, AdoMet formation and the subsequent tripolyphosphate hydrolysis which occurs prior to release of AdoMet from the enzyme. The sequence is that of S-adenosylmethionine synthase from Neisseria meningitidis serogroup B (strain ATCC BAA-335 / MC58).